Consider the following 156-residue polypeptide: Arginine repressor (156 aa).

Belongs to the ArgR family.

It is found in the cytoplasm. Its pathway is amino-acid biosynthesis; L-arginine biosynthesis [regulation]. Its function is as follows. Regulates arginine biosynthesis genes. The sequence is that of Arginine repressor from Shewanella oneidensis (strain ATCC 700550 / JCM 31522 / CIP 106686 / LMG 19005 / NCIMB 14063 / MR-1).